A 360-amino-acid chain; its full sequence is GTPase Obg (360 aa).

An Obg domain is found at 1–156 (MFVDSVEIII…KCVRLELKLI (156 aa)). The OBG-type G domain maps to 157 to 360 (ADIGLVGFPN…LKFVLLKALQ (204 aa)). Residues 163–170 (GFPNAGKS), 188–192 (FTTLV), 210–213 (DIPG), 279–282 (NKCD), and 341–343 (SAV) each bind GTP. Mg(2+) is bound by residues S170 and T190.

This sequence belongs to the TRAFAC class OBG-HflX-like GTPase superfamily. OBG GTPase family. In terms of assembly, monomer. Requires Mg(2+) as cofactor.

It is found in the cytoplasm. An essential GTPase which binds GTP, GDP and possibly (p)ppGpp with moderate affinity, with high nucleotide exchange rates and a fairly low GTP hydrolysis rate. Plays a role in control of the cell cycle, stress response, ribosome biogenesis and in those bacteria that undergo differentiation, in morphogenesis control. The protein is GTPase Obg of Helicobacter pylori (strain P12).